The primary structure comprises 100 residues: Small ribosomal subunit protein uS14c (100 aa).

It belongs to the universal ribosomal protein uS14 family. In terms of assembly, part of the 30S ribosomal subunit.

The protein localises to the plastid. The protein resides in the chloroplast. In terms of biological role, binds 16S rRNA, required for the assembly of 30S particles. This chain is Small ribosomal subunit protein uS14c, found in Pyropia yezoensis (Susabi-nori).